Here is a 122-residue protein sequence, read N- to C-terminus: Large ribosomal subunit protein bL12 (122 aa).

The protein belongs to the bacterial ribosomal protein bL12 family. As to quaternary structure, homodimer. Part of the ribosomal stalk of the 50S ribosomal subunit. Forms a multimeric L10(L12)X complex, where L10 forms an elongated spine to which 2 to 4 L12 dimers bind in a sequential fashion. Binds GTP-bound translation factors.

In terms of biological role, forms part of the ribosomal stalk which helps the ribosome interact with GTP-bound translation factors. Is thus essential for accurate translation. This chain is Large ribosomal subunit protein bL12, found in Deinococcus geothermalis (strain DSM 11300 / CIP 105573 / AG-3a).